We begin with the raw amino-acid sequence, 1607 residues long: Dicer-like protein 1 (1607 aa).

Residues 1–74 (MNAEMREGSS…PDTKKWIVND (74 aa)) are disordered. Residues 142–324 (LFERAKTQNT…IARSPELEGL (183 aa)) enclose the Helicase ATP-binding domain. 155–162 (LDTGSGKT) lines the ATP pocket. The short motif at 267 to 270 (DEAH) is the DEAH box element. One can recognise a Helicase C-terminal domain in the interval 461-632 (KVVILLRILR…EALPADRKLT (172 aa)). In terms of domain architecture, Dicer dsRNA-binding fold spans 665 to 755 (SLICLAAFVA…RPTFTKQLPA (91 aa)). A PAZ domain is found at 905–1040 (GAVTFVRDNE…IVLEPLRISP (136 aa)). RNase III domains lie at 1063 to 1219 (LVAL…LTAQ) and 1272 to 1447 (AARF…VDSR). Positions 1312, 1433, and 1436 each coordinate Mg(2+). Residues 1478–1556 (HPVTFLAGIM…AKKAIQVLEG (79 aa)) enclose the DRBM domain. Zn(2+) is bound by residues Cys-1493, His-1527, Cys-1568, and Cys-1570.

The protein belongs to the helicase family. Dicer subfamily. It depends on Mg(2+) as a cofactor. The cofactor is Mn(2+).

Functionally, dicer-like endonuclease involved in cleaving double-stranded RNA in the RNA interference (RNAi) pathway. Produces 21 to 25 bp dsRNAs (siRNAs) which target the selective destruction of homologous RNAs leading to sequence-specific suppression of gene expression, called post-transcriptional gene silencing (PTGS). Part of a broad host defense response against viral infection and transposons. The sequence is that of Dicer-like protein 1 (DCL1) from Chaetomium globosum (strain ATCC 6205 / CBS 148.51 / DSM 1962 / NBRC 6347 / NRRL 1970) (Soil fungus).